We begin with the raw amino-acid sequence, 1091 residues long: Self-sufficient cytochrome P450 monooxygenase CYP505E1 (1091 aa).

Cys433 is a heme binding site. Residues 528–669 form the Flavodoxin-like domain; that stretch reads ICFFYGSNSG…DLEAWEETSL (142 aa). Residues 534 to 538 and 613 to 645 contribute to the FMN site; these read SNSGT and VFGC…TRLA. Positions 707–935 constitute an FAD-binding FR-type domain; it reads KDLMEARVTT…RPAKEAFHLP (229 aa).

The protein in the N-terminal section; belongs to the cytochrome P450 family. FAD is required as a cofactor. Requires FMN as cofactor. Heme serves as cofactor.

It carries out the reaction 2 oxidized [cytochrome P450] + NADPH = 2 reduced [cytochrome P450] + NADP(+) + H(+). The enzyme catalyses an organic molecule + reduced [NADPH--hemoprotein reductase] + O2 = an alcohol + oxidized [NADPH--hemoprotein reductase] + H2O + H(+). It catalyses the reaction dodecanoate + reduced [NADPH--hemoprotein reductase] + O2 = 5-hydroxydodecanoate + oxidized [NADPH--hemoprotein reductase] + H2O + H(+). The catalysed reaction is tetradecanoate + reduced [NADPH--hemoprotein reductase] + O2 = 7-hydroxytetradecanoate + oxidized [NADPH--hemoprotein reductase] + H2O + H(+). It carries out the reaction dodecan-1-ol + reduced [NADPH--hemoprotein reductase] + O2 = 1,5-dodecanediol + oxidized [NADPH--hemoprotein reductase] + H2O + H(+). The enzyme catalyses dodecan-1-ol + reduced [NADPH--hemoprotein reductase] + O2 = 1,4-dodecanediol + oxidized [NADPH--hemoprotein reductase] + H2O + H(+). It catalyses the reaction dodecan-1-ol + reduced [NADPH--hemoprotein reductase] + O2 = 1,6-dodecanediol + oxidized [NADPH--hemoprotein reductase] + H2O + H(+). In terms of biological role, self-sufficient cytochrome P450 monooxygenase that catalyzes the regioselective in-chain hydroxylation of alkanes, fatty alcohols, and fatty acids at the omega-7 position. Performs hydroxylation of C10-C16 n-alkanes and C12 and C14 fatty alcohols; and thereby enables the one step biocatalytic synthesis of rare alcohols such as 5-dodecanol and 7-tetradecanol. Converts 1-dodecanol into 1,5-dodecanediol as major product with very little sub-terminally hydroxylated products with the 1,4-dodecanediol and 1,6-dodecanediol more abundant. Converts dodecanoic acid to 5-hydroxydodecanoic acid which can be further converted into delta-dodecalactone by lactonization of the 5-hydroxy acid at low pH. Also gives sub-terminal hydroxylation of dodecanoic acid with 9-hydroxydodecanoic acid being the second most abundant product. In Aspergillus niger (strain ATCC MYA-4892 / CBS 513.88 / FGSC A1513), this protein is Self-sufficient cytochrome P450 monooxygenase CYP505E1.